The primary structure comprises 71 residues: uncharacterized protein (71 aa).

The signal sequence occupies residues 1–26; that stretch reads MIKFSVILGMIRCSLTHITTKNTVNA.

This is an uncharacterized protein from Bacillus subtilis (strain 168).